The following is an 85-amino-acid chain: Fungal defensin triintsin (85 aa).

A signal peptide spans 1 to 21 (MQFTKLATVLIVSLMGSAAIA). Residues 22 to 47 (APSVDNAPAVAAEEVAAAPAENLEKR) constitute a propeptide that is removed on maturation. 3 cysteine pairs are disulfide-bonded: Cys-51-Cys-72, Cys-58-Cys-80, and Cys-62-Cys-82.

This sequence belongs to the invertebrate defensin family. In terms of processing, disulfide bonds are essential for antimicrobial activity.

It is found in the secreted. Functionally, antimicrobial peptide with broad-spectrum activity against Gram-positive bacteria, Gram-negative bacteria, and fungi. Also inhibits clinical isolates, including methicillin-resistant S.aureus (MRSA) (MIC=32 uM), K.pneumoniae, C.albicans and C.parapsilosis. Displays minimal inhibitory concentration (MIC) values similar to minimal bactericidal concentrations (MBC), suggesting a disruptive mechanism mode of action associated with membrane lysis. In vitro, shows hemolytic activity against human red blood cells. The polypeptide is Fungal defensin triintsin (Trichophyton interdigitale (strain MR816)).